Reading from the N-terminus, the 200-residue chain is 3-isopropylmalate dehydratase small subunit (200 aa).

It belongs to the LeuD family. LeuD type 1 subfamily. Heterodimer of LeuC and LeuD.

It carries out the reaction (2R,3S)-3-isopropylmalate = (2S)-2-isopropylmalate. The protein operates within amino-acid biosynthesis; L-leucine biosynthesis; L-leucine from 3-methyl-2-oxobutanoate: step 2/4. Functionally, catalyzes the isomerization between 2-isopropylmalate and 3-isopropylmalate, via the formation of 2-isopropylmaleate. This is 3-isopropylmalate dehydratase small subunit from Aliivibrio salmonicida (strain LFI1238) (Vibrio salmonicida (strain LFI1238)).